Consider the following 192-residue polypeptide: Large ribosomal subunit protein uL6 (192 aa).

The protein belongs to the universal ribosomal protein uL6 family. As to quaternary structure, component of the large ribosomal subunit.

It localises to the cytoplasm. Component of the large ribosomal subunit. The ribosome is a large ribonucleoprotein complex responsible for the synthesis of proteins in the cell. This is Large ribosomal subunit protein uL6 (rpl9) from Ictalurus punctatus (Channel catfish).